We begin with the raw amino-acid sequence, 524 residues long: Sterol O-acyltransferase 2 (524 aa).

The tract at residues 1–31 (MEPKAPQLRRRERQGEEQENGACGEGNTRTH) is disordered. Residues 1 to 118 (MEPKAPQLRR…LDELMGVQHF (118 aa)) are Cytoplasmic-facing. H117 is a cholesterol binding site. Residues 119–140 (RTIYHMFIAGLCVLIISTLAID) form a helical membrane-spanning segment. The Lumenal portion of the chain corresponds to 141–160 (FIDEGRLMLEFDLLLFSFGQ). Residues 161–186 (LPLALMMWVPMFLSTLLLPYQTLRLW) form a helical membrane-spanning segment. Residues 187–198 (ARPRSGGAWTLG) lie on the Cytoplasmic side of the membrane. Residues 199-222 (ASLGCVLLAAHAAVLCVLPVHVSV) traverse the membrane as a helical segment. Residues 223-230 (KHELPPAS) are Lumenal-facing. Residues 231–254 (RCVLVFEQVRFLMKSYSFLRETVP) form a helical membrane-spanning segment. Residues 255–295 (GIFCVRGGKGICTPSFSSYLYFLFCPTLIYRETYPRTPSIR) are Cytoplasmic-facing. At C279 the chain carries Cysteine sulfenic acid (-SOH); alternate. A Glycyl cysteine thioester (Cys-Gly) (interchain with G-Cter in ubiquitin); alternate cross-link involves residue C279. The chain crosses the membrane as a helical span at residues 296–328 (WNYVAKNFAQALGCLLYACFILGRLCVPVFANM). The Lumenal segment spans residues 329–345 (SREPFSTRALLLSILHA). A helical membrane pass occupies residues 346-371 (TGPGIFMLLLIFFAFLHCWLNAFAEM). At 372 to 419 (LRFGDRMFYRDWWNSTSFSNYYRTWNVVVHDWLYSYVYQDGLWLLGRQ) the chain is on the cytoplasmic side. Positions 379–385 (FYRDWWN) match the FYXDWWN motif motif. An acyl-CoA-binding residues include N391, R394, N397, H401, Y409, and S432. A helical membrane pass occupies residues 420–444 (GRGAAMLGVFLVSALVHEYIFCFVL). H436 is a catalytic residue. Residues 445 to 450 (GFFYPV) are Lumenal-facing. Residues 451-466 (MLILFLVVGGLLNFTM) traverse the membrane as a helical segment. At 467 to 472 (NDRHTG) the chain is on the cytoplasmic side. Residues 473-504 (PAWNILMWTFLFLGQGIQVSLYCQEWYARRHC) traverse the membrane as a helical segment. The Lumenal segment spans residues 505 to 524 (PLPQPTFWELVTPRSWSCHP).

This sequence belongs to the membrane-bound acyltransferase family. Sterol o-acyltransferase subfamily. In terms of assembly, may form homo- or heterodimers. Interacts with INSIG1; the interaction is direct and promotes association with AMFR/gp78. In terms of processing, polyubiquitinated by AMFR/gp78 at Cys-279, leading to its degradation when the lipid levels are low. Association with AMFR/gp78 is mediated via interaction with INSIG1. High concentration of cholesterol and fatty acid results in Cys-279 oxidation, preventing ubiquitination at the same site, resulting in protein stabilization. Post-translationally, oxidized at Cys-279: high concentration of cholesterol and fatty acid induce reactive oxygen species, which oxidizes Cys-279, preventing ubiquitination at the same site, and resulting in protein stabilization.

It localises to the endoplasmic reticulum membrane. The enzyme catalyses a sterol + a long-chain fatty acyl-CoA = a long-chain 3-hydroxysterol ester + CoA. It catalyses the reaction cholesterol + an acyl-CoA = a cholesterol ester + CoA. It carries out the reaction cholesterol + (9Z)-octadecenoyl-CoA = cholesteryl (9Z-octadecenoate) + CoA. The catalysed reaction is (5Z,8Z,11Z,14Z,17Z)-eicosapentaenoyl-CoA + cholesterol = (5Z,8Z,11Z,14Z,17Z-eicosapentaenoyl)-cholesterol + CoA. The enzyme catalyses (9Z,12Z,15Z)-octadecatrienoyl-CoA + cholesterol = (9Z,12Z,15Z-octadecatrienoyl)-cholesterol + CoA. It catalyses the reaction (5Z,8Z,11Z,14Z)-eicosatetraenoyl-CoA + cholesterol = cholesteryl (5Z,8Z,11Z,14Z)-eicosatetraenoate + CoA. Functionally, catalyzes the formation of fatty acid-cholesterol esters, which are less soluble in membranes than cholesterol. Plays a role in lipoprotein assembly and dietary cholesterol absorption. Utilizes oleoyl-CoA ((9Z)-octadecenoyl-CoA) and linolenoyl-CoA ((9Z,12Z,15Z)-octadecatrienoyl-CoA) as substrates. May provide cholesteryl esters for lipoprotein secretion from hepatocytes and intestinal mucosa. The chain is Sterol O-acyltransferase 2 from Rattus norvegicus (Rat).